The sequence spans 146 residues: Hemoglobin A/D subunit beta (146 aa).

A Globin domain is found at 2–146 (HWTSEEKQYI…VAHALALGYH (145 aa)). Heme b is bound by residues histidine 63 and histidine 92.

Belongs to the globin family. Hemoglobins A and D are heterotetramers of alpha-1, alpha-2 and two identical beta chains. In terms of tissue distribution, red blood cells.

Functionally, involved in oxygen transport from the lung to the various peripheral tissues. This is Hemoglobin A/D subunit beta from Aldabrachelys gigantea (Aldabra giant tortoise).